Reading from the N-terminus, the 577-residue chain is Phosphoethanolamine transferase EptC (577 aa).

The next 5 helical transmembrane spans lie at 17–37 (LGWALLYFWFFSTLLQAIIYI), 44–64 (NGIRDSLLFSSLWLIPVFLFP), 69–89 (IIAAVIGVVLWAASLAALCYY), 119–139 (YFSLKIVLIALAYTAVAVLLW), and 154–174 (VVSFALLYGLILHPIAMNTFI).

This sequence belongs to the phosphoethanolamine transferase family. EptC/CptA subfamily. As to quaternary structure, forms a complex with an unidentified protein of approximately 36 kDa.

It localises to the cell inner membrane. It participates in bacterial outer membrane biogenesis; LPS core biosynthesis. Functionally, catalyzes the addition of a phosphoethanolamine moiety to the outer membrane lipopolysaccharide core. The sequence is that of Phosphoethanolamine transferase EptC (eptC) from Escherichia coli (strain K12).